Reading from the N-terminus, the 277-residue chain is Small ribosomal subunit protein uS3 (277 aa).

Residues 43-111 (IRKVMNKDLE…QVQLNIFEVK (69 aa)) enclose the KH type-2 domain. The segment at 216 to 277 (FEEQQAQQGN…EAAVEPETKE (62 aa)) is disordered. Residues 264–277 (EVSKEAAVEPETKE) show a composition bias toward basic and acidic residues.

It belongs to the universal ribosomal protein uS3 family. In terms of assembly, part of the 30S ribosomal subunit. Forms a tight complex with proteins S10 and S14.

Functionally, binds the lower part of the 30S subunit head. Binds mRNA in the 70S ribosome, positioning it for translation. The chain is Small ribosomal subunit protein uS3 from Bifidobacterium animalis subsp. lactis (strain AD011).